Here is a 142-residue protein sequence, read N- to C-terminus: Small ribosomal subunit protein bS6 (142 aa).

The disordered stretch occupies residues 110–142 (NKKPSHAKEKHEKTEHAHSHHTEEAGSKESHSE).

This sequence belongs to the bacterial ribosomal protein bS6 family.

In terms of biological role, binds together with bS18 to 16S ribosomal RNA. In Helicobacter acinonychis (strain Sheeba), this protein is Small ribosomal subunit protein bS6.